Here is a 298-residue protein sequence, read N- to C-terminus: N-acetylmuramic acid 6-phosphate etherase (298 aa).

In terms of domain architecture, SIS spans 54-217; sequence CISAIKNHGR…STVTMIKLGK (164 aa). E82 (proton donor) is an active-site residue. E113 is a catalytic residue.

The protein belongs to the GCKR-like family. MurNAc-6-P etherase subfamily. Homodimer.

It catalyses the reaction N-acetyl-D-muramate 6-phosphate + H2O = N-acetyl-D-glucosamine 6-phosphate + (R)-lactate. The protein operates within amino-sugar metabolism; N-acetylmuramate degradation. Functionally, specifically catalyzes the cleavage of the D-lactyl ether substituent of MurNAc 6-phosphate, producing GlcNAc 6-phosphate and D-lactate. The protein is N-acetylmuramic acid 6-phosphate etherase of Petrotoga mobilis (strain DSM 10674 / SJ95).